Reading from the N-terminus, the 301-residue chain is Ribosomal RNA small subunit methyltransferase A (301 aa).

S-adenosyl-L-methionine-binding residues include N29, L31, G56, E77, D102, and N127.

Belongs to the class I-like SAM-binding methyltransferase superfamily. rRNA adenine N(6)-methyltransferase family. RsmA subfamily.

The protein resides in the cytoplasm. It carries out the reaction adenosine(1518)/adenosine(1519) in 16S rRNA + 4 S-adenosyl-L-methionine = N(6)-dimethyladenosine(1518)/N(6)-dimethyladenosine(1519) in 16S rRNA + 4 S-adenosyl-L-homocysteine + 4 H(+). In terms of biological role, specifically dimethylates two adjacent adenosines (A1518 and A1519) in the loop of a conserved hairpin near the 3'-end of 16S rRNA in the 30S particle. May play a critical role in biogenesis of 30S subunits. The sequence is that of Ribosomal RNA small subunit methyltransferase A from Halothermothrix orenii (strain H 168 / OCM 544 / DSM 9562).